Here is a 256-residue protein sequence, read N- to C-terminus: Phosphatidylglycerol--prolipoprotein diacylglyceryl transferase (256 aa).

Helical transmembrane passes span 19 to 39, 56 to 76, and 91 to 111; these read VHWY…LGYW, LIFY…MLFY, and IWEG…AAWL. Arg-139 contributes to the a 1,2-diacyl-sn-glycero-3-phospho-(1'-sn-glycerol) binding site. A helical membrane pass occupies residues 231–251; it reads FGWLTMGQVLSIPMLLIGIWL.

The protein belongs to the Lgt family.

It localises to the cell inner membrane. The enzyme catalyses L-cysteinyl-[prolipoprotein] + a 1,2-diacyl-sn-glycero-3-phospho-(1'-sn-glycerol) = an S-1,2-diacyl-sn-glyceryl-L-cysteinyl-[prolipoprotein] + sn-glycerol 1-phosphate + H(+). The protein operates within protein modification; lipoprotein biosynthesis (diacylglyceryl transfer). Functionally, catalyzes the transfer of the diacylglyceryl group from phosphatidylglycerol to the sulfhydryl group of the N-terminal cysteine of a prolipoprotein, the first step in the formation of mature lipoproteins. This chain is Phosphatidylglycerol--prolipoprotein diacylglyceryl transferase, found in Legionella pneumophila (strain Lens).